Reading from the N-terminus, the 404-residue chain is uncharacterized protein (404 aa).

Positions 1-22 (MASSINNSSQPTVPSISNNSHG) are enriched in polar residues. The interval 1–110 (MASSINNSSQ…QQTPVKRRRR (110 aa)) is disordered. Thr-47 is modified (phosphothreonine). Residues 87 to 104 (SRGSSLKSHLETESQQTP) show a composition bias toward polar residues. The segment at 117-166 (VDYCSACGGRGLFICCEGCPCSFHLSCLEPPLTPENIPEGSWFCVTCSIK) adopts a PHD-type zinc-finger fold.

This is an uncharacterized protein from Schizosaccharomyces pombe (strain 972 / ATCC 24843) (Fission yeast).